The sequence spans 261 residues: DNA-directed RNA polymerase subunit Rpo3 (261 aa).

It belongs to the archaeal Rpo3/eukaryotic RPB3 RNA polymerase subunit family. Part of the RNA polymerase complex.

Its subcellular location is the cytoplasm. It catalyses the reaction RNA(n) + a ribonucleoside 5'-triphosphate = RNA(n+1) + diphosphate. DNA-dependent RNA polymerase (RNAP) catalyzes the transcription of DNA into RNA using the four ribonucleoside triphosphates as substrates. This is DNA-directed RNA polymerase subunit Rpo3 from Pyrococcus furiosus (strain ATCC 43587 / DSM 3638 / JCM 8422 / Vc1).